The following is a 2849-amino-acid chain: Polycystin-1-like protein 1 (2849 aa).

Topologically, residues 1–1748 (MAEEAAQNIS…SDISKLQSHP (1748 aa)) are extracellular. N-linked (GlcNAc...) asparagine glycans are attached at residues Asn-8, Asn-295, Asn-338, Asn-376, Asn-447, Asn-482, Asn-514, Asn-605, Asn-657, Asn-751, Asn-875, Asn-926, and Asn-937. 2 consecutive PKD domains span residues 508-590 (SVSV…VQKK) and 592-673 (VANR…VCEP). Residues 674–1571 (CQPPLVKNMG…GEEDGLDNRR (898 aa)) enclose the REJ domain. A compositionally biased stretch (low complexity) spans 970–987 (NLLPTEPGTADPDATTTP). Disordered regions lie at residues 970–1068 (NLLP…PHLS) and 1081–1118 (IPSGGRQPAKDTSFPGSGPSLSAEESPGDGDNLVDPSL). Over residues 1053-1068 (RSERSQPTHSPDPHLS) the composition is skewed to basic and acidic residues. N-linked (GlcNAc...) asparagine glycosylation is found at Asn-1233, Asn-1301, Asn-1306, Asn-1572, Asn-1681, and Asn-1716. A GAIN-B domain is found at 1587 to 1735 (QFTELSENPQ…ALLRRKLKAS (149 aa)). A disulfide bridge connects residues Cys-1691 and Cys-1717. The GPS stretch occupies residues 1691–1735 (CLFWDKREWKSERFSPQPGTSPEKVNCSYHRLAAFALLRRKLKAS). A helical transmembrane segment spans residues 1749–1769 (ENLLPSIFIMGSVILYGFLVA). The Cytoplasmic portion of the chain corresponds to 1770-1956 (KSRQVDHHEK…SSSRYLHTPR (187 aa)). Residues 1796 to 1913 (QLYAVVIDTG…HDGRVERELT (118 aa)) enclose the PLAT domain. Residues 1957–1977 (LTVSFSLLCVYACLTALVAAG) traverse the membrane as a helical segment. Over 1978-1992 (GQEQPHLDVSPTLGS) the chain is Extracellular. Residues 1993 to 2013 (FRVGLLCTLLASPGAQLLSLL) form a helical membrane-spanning segment. The Cytoplasmic segment spans residues 2014–2135 (FRLSKEAPGS…SRALQPWWSS (122 aa)). The interval 2023-2089 (SARVEPHSPL…GTACPAPKLQ (67 aa)) is disordered. The helical transmembrane segment at 2136 to 2156 (AVWAICGTASLACSLGTGFLA) threads the bilayer. Residues 2157 to 2174 (YRFGQEQCVQWLHLLSLS) are Extracellular-facing. The helical transmembrane segment at 2175 to 2195 (VVCCIFITQPLMVCLMALGFA) threads the bilayer. Residues 2196–2281 (WKRRADNHFF…QRMRRESRTR (86 aa)) are Cytoplasmic-facing. The helical transmembrane segment at 2282-2302 (AALRDISMDILMLLLLLCVIY) threads the bilayer. Residues 2303–2522 (GRFSQDEYSL…FRSDSALQYH (220 aa)) lie on the Extracellular side of the membrane. N-linked (GlcNAc...) asparagine glycosylation is present at Asn-2426. The chain crosses the membrane as a helical span at residues 2523 to 2543 (LMLPQLVFLALSLIHLCVQLY). Residues 2544–2562 (RMMDKGVLSYWRKPRNWLE) lie on the Cytoplasmic side of the membrane. A helical transmembrane segment spans residues 2563–2583 (LSVVGVSLTYYAVSGHLVTLA). Over 2584-2616 (GDVTNQFHRGLCRAFMDLTLMASWNQRARWLRG) the chain is Extracellular. Residues 2617 to 2637 (ILLFLFTLKCVYLPGIQNTMA) traverse the membrane as a helical segment. The Cytoplasmic portion of the chain corresponds to 2638–2646 (SCSSMMRHS). The chain crosses the membrane as a helical span at residues 2647–2667 (LPSIFVAGLVGALMLAALSHL). Residues 2668–2711 (HRFLLSMWVLPPGTFTDAFPGLLFHFPRRSQKDCLLGLSKSDQR) lie on the Extracellular side of the membrane. The helical transmembrane segment at 2712–2732 (AMACYFGILLIVSATLCFGML) threads the bilayer. Over 2733–2849 (RGFLMTLPQK…AAEPADIKDF (117 aa)) the chain is Cytoplasmic.

The protein belongs to the polycystin family. In terms of assembly, heterodimer. Interacts with PKD2 to form a calcium channel. Interacts with PKD2L1; to form ciliary calcium channel. May interact with GNA12, GNAS, GNAI1 and GNAI2. As to expression, detected in testis and in fetal and adult heart.

Its subcellular location is the cell projection. The protein localises to the cilium membrane. Component of a calcium-permeant ion channel formed by PKD1L2 and PKD1L1 in primary cilia, where it controls cilium calcium concentration, without affecting cytoplasmic calcium concentration, and regulates sonic hedgehog/SHH signaling and GLI2 transcription. The PKD1L1:PKD2L1 channel complex is mechanosensitive only at high pressures and is highly temperature sensitive. Also involved in left/right axis specification downstream of nodal flow by forming a complex with PKD2 in cilia to facilitate flow detection in left/right patterning. May function as a G-protein-coupled receptor. This chain is Polycystin-1-like protein 1, found in Homo sapiens (Human).